The primary structure comprises 241 residues: Uridylate kinase (241 aa).

14–17 (KLSG) is an ATP binding site. Gly-56 contributes to the UMP binding site. ATP is bound by residues Gly-57 and Arg-61. Residues Asp-77 and 138 to 145 (TGNPFFTT) contribute to the UMP site. Residues Thr-165, Tyr-171, and Asp-174 each coordinate ATP.

Belongs to the UMP kinase family. In terms of assembly, homohexamer.

The protein resides in the cytoplasm. It catalyses the reaction UMP + ATP = UDP + ADP. Its pathway is pyrimidine metabolism; CTP biosynthesis via de novo pathway; UDP from UMP (UMPK route): step 1/1. With respect to regulation, inhibited by UTP. Functionally, catalyzes the reversible phosphorylation of UMP to UDP. In Psychrobacter cryohalolentis (strain ATCC BAA-1226 / DSM 17306 / VKM B-2378 / K5), this protein is Uridylate kinase.